The primary structure comprises 588 residues: A-type ATP synthase subunit A (588 aa).

ATP is bound at residue 237 to 244 (GPFGSGKT).

The protein belongs to the ATPase alpha/beta chains family. In terms of assembly, has multiple subunits with at least A(3), B(3), C, D, E, F, H, I and proteolipid K(x).

It localises to the cell membrane. It carries out the reaction ATP + H2O + 4 H(+)(in) = ADP + phosphate + 5 H(+)(out). Functionally, component of the A-type ATP synthase that produces ATP from ADP in the presence of a proton gradient across the membrane. The A chain is the catalytic subunit. The protein is A-type ATP synthase subunit A of Methanoregula boonei (strain DSM 21154 / JCM 14090 / 6A8).